Here is a 436-residue protein sequence, read N- to C-terminus: Mitochondrial substrate carrier family protein Y (436 aa).

A disordered region spans residues 1–102 (MENNNKNINT…NINNNNINKK (102 aa)). The Mitochondrial intermembrane segment spans residues 1–137 (MENNNKNINT…GGFLAGLSRN (137 aa)). Solcar repeat units follow at residues 135–226 (SRNV…TLKY) and 236–334 (HDTL…LKKQ). Residues 138–158 (VTRIIGSFSSGMAEESAGYPL) traverse the membrane as a helical segment. The Mitochondrial matrix segment spans residues 159–194 (DLIKTRIQLSQSGVSGGGGTNTSIIKIFKDVIKTEG). A helical membrane pass occupies residues 195–215 (VIGLFKGLSSPLILSALVTAI). Over 216–238 (QFGLFEDTLKYFRKHQYFKNHDT) the chain is Mitochondrial intermembrane. Residues 239–259 (LSLLFSGSIAGFAQSFITCPV) form a helical membrane-spanning segment. Residues 260-313 (DLVKIQMQIQGIPSSQPNSNNNNNNNKAKGNSYFTKLIYREKGLLGFYQGLSPT) are Mitochondrial matrix-facing. The chain crosses the membrane as a helical span at residues 314–334 (LFRDVPGLAIFFTTYETLKKQ). Residues 335–347 (FGQPELSTQSPTE) lie on the Mitochondrial intermembrane side of the membrane. Residues 348–368 (FIKSFIPIVLSGGSAGVFYHG) form a helical membrane-spanning segment. Residues 350-436 (KSFIPIVLSG…FLVYEMVINL (87 aa)) form a Solcar 3 repeat. Over 369-413 (LTHPFDIAKTLIQSDRSATKYKGTFDCLKQVYQNQGPKSLFKGFS) the chain is Mitochondrial matrix. A helical membrane pass occupies residues 414 to 434 (AVAIKSFQSNAVGFLVYEMVI). The Mitochondrial intermembrane portion of the chain corresponds to 435–436 (NL).

This sequence belongs to the mitochondrial carrier (TC 2.A.29) family.

The protein resides in the mitochondrion inner membrane. In terms of biological role, mitochondrial solute carriers shuttle metabolites, nucleotides, and cofactors through the mitochondrial inner membrane. The polypeptide is Mitochondrial substrate carrier family protein Y (mcfY) (Dictyostelium discoideum (Social amoeba)).